Consider the following 473-residue polypeptide: MAVKKYSAGVKEYRQTYWMPEYTPLDSDILACFKITPQPGVDREEAAAAVAAESSTGTWTTVWTDLLTDMDYYKGRAYRIEDVPGDDAAFYAFIAYPIDLFEEGSVVNVFTSLVGNVFGFKAVRGLRLEDVRFPLAYVKTCGGPPHGIQVERDKMNKYGRPLLGCTIKPKLGLSAKNYGRAVYECLRGGLDFTKDDENINSQPFMRWRDRFLFVQDATETAEAQTGERKGHYLNVTAPTPEEMYKRAEFAKEIGAPIIMHDYITGGFTANTGLAKWCQDNGVLLHIHRAMHAVIDRNPNHGIHFRVLTKILRLSGGDHLHTGTVVGKLEGDRASTLGWIDLLRESFIPEDRSRGIFFDQDWGSMPGVFAVASGGIHVWHMPALVNIFGDDSVLQFGGGTLGHPWGNAAGAAANRVALEACVEARNQGRDIEKEGKEILTAAAQHSPELKIAMETWKEIKFEFDTVDKLDTQNR.

The tract at residues Met-1–Ala-136 is necessary and sufficient to target proteins to carboxysomes, interacts with shell proteins. Residues Asn-116 and Thr-166 each coordinate substrate. Lys-168 functions as the Proton acceptor in the catalytic mechanism. Residue Lys-170 participates in substrate binding. Positions 194, 196, and 197 each coordinate Mg(2+). Lys-194 is subject to N6-carboxylysine. The active-site Proton acceptor is His-287. Substrate is bound by residues Arg-288, His-320, and Ser-372.

The protein belongs to the RuBisCO large chain family. Type I subfamily. In terms of assembly, heterohexadecamer of 8 large chains and 8 small chains. Forms a CsoS2-CsoS1-RuBisCO complex. The N-terminus (residues 1-136) interacts with shell proteins CsoS1A, CsoS1B and CsoS1C. Holo-RuBisCO interacts with the N-terminal repeats of CsoS2; binding is sensitive to ionic strength. A fusion of a single N-terminal repeat to the C-terminus of the large subunit of RuBisCO (cbbL) shows the repeat can lie between a CbbL dimer, making minor contacts to CbbS; thus each RuBisCO holoenzyme could bind 8 repeats. It depends on Mg(2+) as a cofactor.

It is found in the carboxysome. It catalyses the reaction 2 (2R)-3-phosphoglycerate + 2 H(+) = D-ribulose 1,5-bisphosphate + CO2 + H2O. It carries out the reaction D-ribulose 1,5-bisphosphate + O2 = 2-phosphoglycolate + (2R)-3-phosphoglycerate + 2 H(+). RuBisCO catalyzes two reactions: the carboxylation of D-ribulose 1,5-bisphosphate, the primary event in carbon dioxide fixation, as well as the oxidative fragmentation of the pentose substrate. Both reactions occur simultaneously and in competition at the same active site. There are estimated to be 270 RuBisCO heterohexadecamers per carboxysome. In terms of biological role, alpha-carboxysomes are able to assemble in the absence of RuBisCO, unlike beta-carboxysomes. The RuBisCO large subunit is required for enzyme integration into carboxysomes; replacing it with the carboxysomally targeted gene (Tcr_0838, AC Q31HD9) of H.crungenus places RuBisCO in the carboxysome, while the non-carboxysomal large subunit of H.crungenus (Tcr_0427, AC Q31IK0) is not incorporated in the carboxysome. This Halothiobacillus neapolitanus (strain ATCC 23641 / c2) (Thiobacillus neapolitanus) protein is Ribulose bisphosphate carboxylase large chain.